The chain runs to 565 residues: Bifunctional dihydrofolate reductase-thymidylate synthase 2 (565 aa).

The region spanning 65 to 242 is the DHFR domain; sequence TYQVVVAATK…LRFSFTTHVR (178 aa). Val69 contacts substrate. NADP(+) contacts are provided by residues Ala71 and 77–83; that span reads GIGKDGK. Position 91 (Asp91) interacts with substrate. NADP(+) is bound by residues 115–117 and 136–139; these read RKT and LSRS. Residue Ile178 participates in substrate binding. NADP(+) is bound at residue 179–186; sequence GGGDILRE. Thr199 contacts substrate. The segment at 245–280 is hinge; the sequence is SSSAGEASDESDGSKVLQVDWKKFSSVLPKMIFDRH. A thymidylate synthase region spans residues 281–565; that stretch reads EEYLYLNLVK…HKKIDMKMAV (285 aa). Position 302 (Arg302) interacts with dUMP. The active site involves Cys447. Residues His448, 466–470, Asn478, and 508–510 each bind dUMP; these read QRSAD and HVY.

This sequence in the N-terminal section; belongs to the dihydrofolate reductase family. The protein in the C-terminal section; belongs to the thymidylate synthase family. Heterodimer or homodimer.

It catalyses the reaction (6S)-5,6,7,8-tetrahydrofolate + NADP(+) = 7,8-dihydrofolate + NADPH + H(+). The enzyme catalyses dUMP + (6R)-5,10-methylene-5,6,7,8-tetrahydrofolate = 7,8-dihydrofolate + dTMP. It participates in cofactor biosynthesis; tetrahydrofolate biosynthesis; 5,6,7,8-tetrahydrofolate from 7,8-dihydrofolate: step 1/1. Bifunctional enzyme. Involved in de novo dTMP biosynthesis. Key enzyme in folate metabolism. Can play two different roles depending on the source of dihydrofolate: de novo synthesis of tetrahydrofolate or recycling of the dihydrofolate released as one of the end products of the TS catalyzed reaction. Catalyzes an essential reaction for de novo glycine and purine synthesis, DNA precursor synthesis, and for the conversion of dUMP to dTMP. This chain is Bifunctional dihydrofolate reductase-thymidylate synthase 2 (THY-2), found in Arabidopsis thaliana (Mouse-ear cress).